The sequence spans 161 residues: Protein-export protein SecB (161 aa).

The protein belongs to the SecB family. In terms of assembly, homotetramer, a dimer of dimers. One homotetramer interacts with 1 SecA dimer.

It localises to the cytoplasm. In terms of biological role, one of the proteins required for the normal export of preproteins out of the cell cytoplasm. It is a molecular chaperone that binds to a subset of precursor proteins, maintaining them in a translocation-competent state. It also specifically binds to its receptor SecA. The chain is Protein-export protein SecB from Shewanella putrefaciens (strain CN-32 / ATCC BAA-453).